Consider the following 73-residue polypeptide: Large ribosomal subunit protein bL31 (73 aa).

It belongs to the bacterial ribosomal protein bL31 family. Type A subfamily. Part of the 50S ribosomal subunit.

Its function is as follows. Binds the 23S rRNA. In Rhizobium rhizogenes (strain K84 / ATCC BAA-868) (Agrobacterium radiobacter), this protein is Large ribosomal subunit protein bL31.